A 1088-amino-acid chain; its full sequence is RNA-directed RNA polymerase (1088 aa).

Positions 501-687 (LSYGDVTRFL…AKRYIAGGKI (187 aa)) constitute a RdRp catalytic domain.

This sequence belongs to the reoviridae RNA-directed RNA polymerase family. Interacts with VP3 (Potential). Interacts with VP2; this interaction activates VP1. Interacts with NSP5; this interaction is probably necessary for the formation of functional virus factories. Interacts with NSP2; this interaction is weak. It depends on Mg(2+) as a cofactor.

It localises to the virion. It catalyses the reaction RNA(n) + a ribonucleoside 5'-triphosphate = RNA(n+1) + diphosphate. In terms of biological role, RNA-directed RNA polymerase that is involved in both transcription and genome replication. Together with VP3 capping enzyme, forms an enzyme complex positioned near the channels situated at each of the five-fold vertices of the core. Following infection, the outermost layer of the virus is lost, leaving a double-layered particle (DLP) made up of the core and VP6 shell. VP1 then catalyzes the transcription of fully conservative plus-strand genomic RNAs that are extruded through the DLP's channels into the cytoplasm where they function as mRNAs for translation of viral proteins. One copy of each of the viral (+)RNAs is also recruited during core assembly, together with newly synthesized polymerase complexes and VP2. The polymerase of these novo-formed particles catalyzes the synthesis of complementary minus-strands leading to dsRNA formation. To do so, the polymerase specifically recognizes and binds 4 bases 5'-UGUG-3' in the conserved 3'-sequence of plus-strand RNA templates. VP2 presumably activates the autoinhibited VP1-RNA complex to coordinate packaging and genome replication. Once dsRNA synthesis is complete, the polymerase switches to the transcriptional mode, thus providing secondary transcription. This is RNA-directed RNA polymerase from Bos taurus (Bovine).